Consider the following 540-residue polypeptide: Testis-specific chromodomain protein Y 1 (540 aa).

The region spanning 6 to 66 (FEVEAIVDKR…RQTEKQKKLT (61 aa)) is the Chromo domain. The segment at 76–106 (NNARRRTSRSTKANYSKNSPKTPVTDKHHRS) is disordered. Positions 87–97 (KANYSKNSPKT) are enriched in polar residues.

As to quaternary structure, interacts (via chromo domain) with histone H3K9me3. In terms of tissue distribution, testis-specific. Detected in spermatids (at protein level).

The protein resides in the nucleus. It carries out the reaction L-lysyl-[protein] + acetyl-CoA = N(6)-acetyl-L-lysyl-[protein] + CoA + H(+). In terms of biological role, has histone acetyltransferase activity, with a preference for histone H4. In Homo sapiens (Human), this protein is Testis-specific chromodomain protein Y 1 (CDY1).